We begin with the raw amino-acid sequence, 66 residues long: Large ribosomal subunit protein bL35 (66 aa).

A compositionally biased stretch (basic residues) spans 1–16 (MPKMKTHRGAAKRVKR). A disordered region spans residues 1–28 (MPKMKTHRGAAKRVKRTGSGQLKRSRAF).

The protein belongs to the bacterial ribosomal protein bL35 family.

The chain is Large ribosomal subunit protein bL35 from Staphylococcus epidermidis (strain ATCC 35984 / DSM 28319 / BCRC 17069 / CCUG 31568 / BM 3577 / RP62A).